The sequence spans 199 residues: MLKLKICGIKDEKNAKDLAFLNIDFFGFIFAKSPRRVSLEQARNLSAIFHEKDKKVVGVFVDENLEQILRCIKEAKLDGIQIYRTITKEEFEILKVQNVFVWQVISVENSLDLKSEIFANLVLFDAKGILKGGNGISFDWTLLGSYTKDFILAGGIGLDNVHKAVQTGAKILDLNSKLEDEKGLKDINKIKQILKELKK.

The protein belongs to the TrpF family.

It carries out the reaction N-(5-phospho-beta-D-ribosyl)anthranilate = 1-(2-carboxyphenylamino)-1-deoxy-D-ribulose 5-phosphate. The protein operates within amino-acid biosynthesis; L-tryptophan biosynthesis; L-tryptophan from chorismate: step 3/5. This chain is N-(5'-phosphoribosyl)anthranilate isomerase, found in Campylobacter jejuni subsp. jejuni serotype O:6 (strain 81116 / NCTC 11828).